Here is a 242-residue protein sequence, read N- to C-terminus: Ribosomal RNA small subunit methyltransferase G (242 aa).

Residues Gly78, Phe83, 129–130, and Arg148 each bind S-adenosyl-L-methionine; that span reads AE. The tract at residues 221 to 242 is disordered; that stretch reads TKKRYPRKAGVPEKSPIGGKHD.

The protein belongs to the methyltransferase superfamily. RNA methyltransferase RsmG family.

The protein resides in the cytoplasm. Functionally, specifically methylates the N7 position of a guanine in 16S rRNA. The protein is Ribosomal RNA small subunit methyltransferase G of Oenococcus oeni (strain ATCC BAA-331 / PSU-1).